Consider the following 349-residue polypeptide: Probable G-protein coupled receptor 21 (349 aa).

Residues 1-32 (MNSTLDGNQSSHPFCLLAFGYLETVNFCLLEV) lie on the Extracellular side of the membrane. N-linked (GlcNAc...) asparagine glycosylation is found at Asn-2 and Asn-8. The helical transmembrane segment at 33 to 53 (LIIVFLTVLIISGNIIVIFVF) threads the bilayer. Residues 54-75 (HCAPLLNHHTTSYFIQTMAYAD) lie on the Cytoplasmic side of the membrane. The chain crosses the membrane as a helical span at residues 76–96 (LFVGVSCVVPSLSLLHHPLPV). The Extracellular portion of the chain corresponds to 97 to 104 (EESLTCQI). The chain crosses the membrane as a helical span at residues 105–125 (FGFVVSVLKSVSMASLACISI). At 126-147 (DRYIAITKPLTYNTLVTPWRLR) the chain is on the cytoplasmic side. A helical membrane pass occupies residues 148–168 (LCIFLIWLYSTLVFLPSFFHW). Topologically, residues 169 to 191 (GKPGYHGDVFQWCAESWHTDSYF) are extracellular. Residues 192–212 (TLFIVMMLYAPAALIVCFTYF) form a helical membrane-spanning segment. At 213–252 (NIFRICQQHTKDISERQARFSSQSGETGEVQACPDKRYAM) the chain is on the cytoplasmic side. The chain crosses the membrane as a helical span at residues 253 to 273 (VLFRITSVFYILWLPYIIYFL). The Extracellular segment spans residues 274–283 (LESSTGHSNR). A helical transmembrane segment spans residues 284-304 (FASFLTTWLAISNSFCNCVIY). At 305–349 (SLSNSVFQRGLKRLSGAMCTSCASQTTANDPYTVRSKGPLNGCHI) the chain is on the cytoplasmic side.

It belongs to the G-protein coupled receptor 1 family. As to expression, not detected in the brain regions thalamus, putamen, caudate, frontal cortex, pons, hypothalamus, hippocampus.

The protein resides in the cell membrane. Functionally, orphan receptor. This is Probable G-protein coupled receptor 21 (GPR21) from Homo sapiens (Human).